The following is a 459-amino-acid chain: Interleukin-7 receptor subunit alpha (459 aa).

Positions 1–20 are cleaved as a signal peptide; it reads MTILGTTFGMVFSLLQVVSG. Residues 21–239 are Extracellular-facing; that stretch reads ESGYAQNGDL…EINNSSGEMD (219 aa). Cysteine 42 and cysteine 57 are oxidised to a cystine. N-linked (GlcNAc...) asparagine glycans are attached at residues asparagine 49 and asparagine 65. 2 cysteine pairs are disulfide-bonded: cysteine 74–cysteine 82 and cysteine 108–cysteine 118. The 101-residue stretch at 131 to 231 folds into the Fibronectin type-III domain; sequence APFDLSVVYR…PSYYFRTPEI (101 aa). N-linked (GlcNAc...) asparagine glycosylation is found at asparagine 151 and asparagine 182. Positions 217-221 match the WSXWS motif motif; that stretch reads WSEWS. Asparagine 232 and asparagine 233 each carry an N-linked (GlcNAc...) asparagine glycan. Residues 240–264 form a helical membrane-spanning segment; the sequence is PILLTISILSFFSVALLVILACVLW. The Cytoplasmic portion of the chain corresponds to 265–459; it reads KKRIKPIVWP…VTMSSFYQNQ (195 aa). The short motif at 272–280 is the Box 1 motif element; it reads VWPSLPDHK. The residue at position 282 (threonine 282) is a Phosphothreonine; by PKC.

It belongs to the type I cytokine receptor family. Type 4 subfamily. In terms of assembly, the IL7 receptor is a heterodimer of IL7R and IL2RG. The TSLP receptor is a heterodimer of CRLF2 and IL7R. Interacts with CD53. Post-translationally, N-glycosylated IL-7Ralpha binds IL7 300-fold more tightly than the unglycosylated form. In terms of processing, ubiquitinated by MARCHF8; leading to lysosomal degradation.

Its subcellular location is the cell membrane. The protein resides in the secreted. In terms of biological role, receptor for interleukin-7. Also acts as a receptor for thymic stromal lymphopoietin (TSLP). The protein is Interleukin-7 receptor subunit alpha (IL7R) of Homo sapiens (Human).